The sequence spans 130 residues: Small ribosomal subunit protein uS8A (130 aa).

This sequence belongs to the universal ribosomal protein uS8 family. In terms of assembly, component of the small ribosomal subunit (SSU). Mature ribosomes consist of a small (40S) and a large (60S) subunit. The 40S subunit contains about 32 different proteins and 1 molecule of RNA (18S). The 60S subunit contains 45 different proteins and 3 molecules of RNA (25S, 5.8S and 5S).

The protein resides in the cytoplasm. Component of the ribosome, a large ribonucleoprotein complex responsible for the synthesis of proteins in the cell. The small ribosomal subunit (SSU) binds messenger RNAs (mRNAs) and translates the encoded message by selecting cognate aminoacyl-transfer RNA (tRNA) molecules. The large subunit (LSU) contains the ribosomal catalytic site termed the peptidyl transferase center (PTC), which catalyzes the formation of peptide bonds, thereby polymerizing the amino acids delivered by tRNAs into a polypeptide chain. The nascent polypeptides leave the ribosome through a tunnel in the LSU and interact with protein factors that function in enzymatic processing, targeting, and the membrane insertion of nascent chains at the exit of the ribosomal tunnel. In Candida albicans (strain SC5314 / ATCC MYA-2876) (Yeast), this protein is Small ribosomal subunit protein uS8A (RPS22A).